The chain runs to 388 residues: Ribonuclease D (388 aa).

Residues 7–173 form the 3'-5' exonuclease domain; the sequence is ITDSKTLAQF…QIFPKMLEEL (167 aa). Positions 212–293 constitute an HRDC domain; it reads KADVLGRLKA…ASHAPLAKEE (82 aa).

This sequence belongs to the RNase D family. A divalent metal cation is required as a cofactor.

It is found in the cytoplasm. It catalyses the reaction Exonucleolytic cleavage that removes extra residues from the 3'-terminus of tRNA to produce 5'-mononucleotides.. In terms of biological role, exonuclease involved in the 3' processing of various precursor tRNAs. Initiates hydrolysis at the 3'-terminus of an RNA molecule and releases 5'-mononucleotides. The sequence is that of Ribonuclease D from Sphingobium indicum (strain DSM 16413 / CCM 7287 / MTCC 6362 / UT26 / NBRC 101211 / UT26S) (Sphingobium japonicum).